A 1058-amino-acid polypeptide reads, in one-letter code: MPKRKDIKTILVIGSGPIIIGQAAEFDYAGTQACLSLREEGYEVILVNSNPATIMTDKEIADKVYIEPLTVEFLSKIIRKEKPDALLPTLGGQVALNLAVSLHESGILDECGVEILGTKLTSIKQAEDRELFRDLMNELNEPVPDSAIVHTLEEAENFVKEIDYPVIVRPAFTMGGTGGGICYNEEDLHEIVPNGLNYSPVHQCLLEKSIAGYKEIEYEVMRDSNDTAIVVCNMENIDPVGIHTGDSIVVAPSQTLTDREHHMLRDVSLKIIRALKIEGGCNVQIALDPNSFKYYIIEVNPRVSRSSALASKATGYPIAKIAAKIAVGMTLDEIINPVTKSSYACFEPAIDYVVTKIPRFPFDKFGDGDRYLGTQMKATGEVMAIGRTLEESLLKAIRSLEYGVHHLGLPNGEEFSLEKIIKRIKLAGDERLFFIGEALRRDVSIEEIHEYTKIDLFFLNKMKNIIDLEHLLKDNKGNIELLRKVKTFGFSDRVIAHRWEMTEPEITELRHKHNIRPVYKMVDTCAAEFDSNTPYFYSTYEFENESTRSDKEKIVVLGSGPIRIGQGIEFDYATVHAIMAIKKLGYEAIVINNNPETVSTDFSISDKLYFEPLTQEDVMEILDLEKPLGVVVQFGGQTAINLADKLVKNGIQILGSSLDSIDTAEDRDRFEKLLIGLKIPQPLGKTAFDVETALKNANEIGYPVLVRPSYVLGGRAMEIVYNDEDLTKYMEKAVHINPDHPVLIDRYLIGKEIEVDAISDGENTFIPGIMEHIERAGVHSGDSISIYPPQSLSEKEIETLIDYTKKLASGLEVKGLINIQYVVSKGEIYVLEVNPRASRTVPFLSKVTGVPVANIAMQCILGKKLKDLGFTKDIADIGNFVSVKVPVFSFQKLKNVDTTLGPEMKSTGEVIGTDVNLQKALYKGLTAAGIKIKDYGRVLFTIDDKNKEAALNLAKGFSDVGFSILTTEGTGIYFEEYGLKVKKVGKIDNSDYSVLDAIQNGDVDIVINTTTKGKSSEKDGFRIRRKATEYGVICFTSLDTANALLRVIESMSFRVQTL.

The carboxyphosphate synthetic domain stretch occupies residues 1–401 (MPKRKDIKTI…SLLKAIRSLE (401 aa)). Positions 129, 169, 175, 176, 208, 210, 215, 241, 242, 243, 284, and 298 each coordinate ATP. Positions 133–327 (RDLMNELNEP…IAKIAAKIAV (195 aa)) constitute an ATP-grasp 1 domain. Mg(2+) contacts are provided by Gln284, Glu298, and Asn300. Gln284, Glu298, and Asn300 together coordinate Mn(2+). The segment at 402–546 (YGVHHLGLPN…YSTYEFENES (145 aa)) is oligomerization domain. The tract at residues 547–929 (TRSDKEKIVV…ALYKGLTAAG (383 aa)) is carbamoyl phosphate synthetic domain. Residues 671 to 861 (EKLLIGLKIP…VANIAMQCIL (191 aa)) form the ATP-grasp 2 domain. Positions 707, 746, 748, 752, 777, 778, 779, 780, 820, and 832 each coordinate ATP. Positions 820, 832, and 834 each coordinate Mg(2+). Residues Gln820, Glu832, and Asn834 each contribute to the Mn(2+) site. An MGS-like domain is found at 930-1058 (IKIKDYGRVL…ESMSFRVQTL (129 aa)). Residues 930–1058 (IKIKDYGRVL…ESMSFRVQTL (129 aa)) form an allosteric domain region.

This sequence belongs to the CarB family. Composed of two chains; the small (or glutamine) chain promotes the hydrolysis of glutamine to ammonia, which is used by the large (or ammonia) chain to synthesize carbamoyl phosphate. Tetramer of heterodimers (alpha,beta)4. The cofactor is Mg(2+). Requires Mn(2+) as cofactor.

It carries out the reaction hydrogencarbonate + L-glutamine + 2 ATP + H2O = carbamoyl phosphate + L-glutamate + 2 ADP + phosphate + 2 H(+). The enzyme catalyses hydrogencarbonate + NH4(+) + 2 ATP = carbamoyl phosphate + 2 ADP + phosphate + 2 H(+). Its pathway is amino-acid biosynthesis; L-arginine biosynthesis; carbamoyl phosphate from bicarbonate: step 1/1. The protein operates within pyrimidine metabolism; UMP biosynthesis via de novo pathway; (S)-dihydroorotate from bicarbonate: step 1/3. Functionally, large subunit of the glutamine-dependent carbamoyl phosphate synthetase (CPSase). CPSase catalyzes the formation of carbamoyl phosphate from the ammonia moiety of glutamine, carbonate, and phosphate donated by ATP, constituting the first step of 2 biosynthetic pathways, one leading to arginine and/or urea and the other to pyrimidine nucleotides. The large subunit (synthetase) binds the substrates ammonia (free or transferred from glutamine from the small subunit), hydrogencarbonate and ATP and carries out an ATP-coupled ligase reaction, activating hydrogencarbonate by forming carboxy phosphate which reacts with ammonia to form carbamoyl phosphate. The chain is Carbamoyl phosphate synthase large chain from Fusobacterium nucleatum subsp. nucleatum (strain ATCC 25586 / DSM 15643 / BCRC 10681 / CIP 101130 / JCM 8532 / KCTC 2640 / LMG 13131 / VPI 4355).